The primary structure comprises 346 residues: uncharacterized protein (346 aa).

Transmembrane regions (helical) follow at residues 15–35, 55–75, 93–113, 139–159, 182–202, 229–249, 269–289, and 295–315; these read YLRGFALLGIILVNILGLLTV, VEARFYPIFSFLFGVGFYLFI, ILVLFIFGFIHFLFQPGEALT, ILLLFVSIFAAKIFMPLPLIL, IFTFFMFILSVGGLLLQYCYV, LGVATGPILSAFYAGFLLLLL, LTNYISQTALILLAGKLFHLF, and LQSLWLCLAIYVIQLIFSAMW.

To E.coli YeiB, B.subtilis YxaH and B.subtilis YrkO.

It localises to the cell membrane. Its function is as follows. Involved in transport. This is an uncharacterized protein from Bacillus acidopullulyticus.